The primary structure comprises 181 residues: Adenylate kinase (181 aa).

Residue Gly10–Thr15 participates in ATP binding. The segment at Ser30 to Val59 is NMP. AMP is bound by residues Thr31, Arg36, Lys57–Val59, Gly85–Arg88, and Gln92. The tract at residues Ser126 to Asp132 is LID. Arg127 lines the ATP pocket. Residues Arg129 and Arg140 each coordinate AMP. ATP is bound at residue Gly166.

It belongs to the adenylate kinase family. In terms of assembly, monomer.

It localises to the cytoplasm. The enzyme catalyses AMP + ATP = 2 ADP. The protein operates within purine metabolism; AMP biosynthesis via salvage pathway; AMP from ADP: step 1/1. Its function is as follows. Catalyzes the reversible transfer of the terminal phosphate group between ATP and AMP. Plays an important role in cellular energy homeostasis and in adenine nucleotide metabolism. The polypeptide is Adenylate kinase (Corynebacterium glutamicum (strain R)).